The primary structure comprises 219 residues: Ropporin-1-like protein (219 aa).

In terms of domain architecture, RIIa spans 17-54 (PELPDILKQFTKAAIRTQPHDLLQWSAAYFDSLSKGEP).

The protein belongs to the ropporin family. As to quaternary structure, component of axonemal radial spoke complexes.

Its subcellular location is the cell projection. The protein localises to the cilium. It is found in the flagellum. Functions as part of axonemal radial spoke complexes that play an important part in the motility of sperm and cilia. Important for male fertility. Involved in fibrous sheath integrity and sperm motility, plays a role in PKA-dependent signaling processes required for spermatozoa capacitation. The polypeptide is Ropporin-1-like protein (ropn1l) (Xenopus laevis (African clawed frog)).